Consider the following 911-residue polypeptide: Protein translocase subunit SecA (911 aa).

ATP is bound by residues Gln87, 105 to 109 (GEGKT), and Asp512. Residues 861 to 893 (APGLESEQLSEEGAEVAVASAPVRNDQKLGRNE) are disordered. Residues Cys895, Cys897, Cys906, and His907 each contribute to the Zn(2+) site.

This sequence belongs to the SecA family. In terms of assembly, monomer and homodimer. Part of the essential Sec protein translocation apparatus which comprises SecA, SecYEG and auxiliary proteins SecDF-YajC and YidC. The cofactor is Zn(2+).

It is found in the cell inner membrane. The protein localises to the cytoplasm. The enzyme catalyses ATP + H2O + cellular proteinSide 1 = ADP + phosphate + cellular proteinSide 2.. Part of the Sec protein translocase complex. Interacts with the SecYEG preprotein conducting channel. Has a central role in coupling the hydrolysis of ATP to the transfer of proteins into and across the cell membrane, serving both as a receptor for the preprotein-SecB complex and as an ATP-driven molecular motor driving the stepwise translocation of polypeptide chains across the membrane. In Pseudomonas putida (strain ATCC 700007 / DSM 6899 / JCM 31910 / BCRC 17059 / LMG 24140 / F1), this protein is Protein translocase subunit SecA.